A 129-amino-acid polypeptide reads, in one-letter code: uncharacterized protein (129 aa).

This is an uncharacterized protein from Invertebrate iridescent virus 6 (IIV-6).